A 156-amino-acid chain; its full sequence is Methylated-DNA--protein-cysteine methyltransferase (156 aa).

C120 (nucleophile; methyl group acceptor) is an active-site residue.

This sequence belongs to the MGMT family.

The protein resides in the cytoplasm. The enzyme catalyses a 6-O-methyl-2'-deoxyguanosine in DNA + L-cysteinyl-[protein] = S-methyl-L-cysteinyl-[protein] + a 2'-deoxyguanosine in DNA. The catalysed reaction is a 4-O-methyl-thymidine in DNA + L-cysteinyl-[protein] = a thymidine in DNA + S-methyl-L-cysteinyl-[protein]. In terms of biological role, involved in the cellular defense against the biological effects of O6-methylguanine (O6-MeG) and O4-methylthymine (O4-MeT) in DNA. Repairs the methylated nucleobase in DNA by stoichiometrically transferring the methyl group to a cysteine residue in the enzyme. This is a suicide reaction: the enzyme is irreversibly inactivated. In Sulfurisphaera tokodaii (strain DSM 16993 / JCM 10545 / NBRC 100140 / 7) (Sulfolobus tokodaii), this protein is Methylated-DNA--protein-cysteine methyltransferase.